The chain runs to 229 residues: 2-C-methyl-D-erythritol 4-phosphate cytidylyltransferase (229 aa).

The protein belongs to the IspD/TarI cytidylyltransferase family. IspD subfamily.

The enzyme catalyses 2-C-methyl-D-erythritol 4-phosphate + CTP + H(+) = 4-CDP-2-C-methyl-D-erythritol + diphosphate. It participates in isoprenoid biosynthesis; isopentenyl diphosphate biosynthesis via DXP pathway; isopentenyl diphosphate from 1-deoxy-D-xylulose 5-phosphate: step 2/6. Catalyzes the formation of 4-diphosphocytidyl-2-C-methyl-D-erythritol from CTP and 2-C-methyl-D-erythritol 4-phosphate (MEP). This chain is 2-C-methyl-D-erythritol 4-phosphate cytidylyltransferase, found in Clostridium acetobutylicum (strain ATCC 824 / DSM 792 / JCM 1419 / IAM 19013 / LMG 5710 / NBRC 13948 / NRRL B-527 / VKM B-1787 / 2291 / W).